We begin with the raw amino-acid sequence, 523 residues long: Sorting nexin-2 (523 aa).

A disordered region spans residues 1 to 104 (MAAEREPPPL…EPSPAVTPVT (104 aa)). 2 stretches are compositionally biased toward low complexity: residues 27–48 (LFTSTVSTLESSPSSPEPTSLP) and 93–104 (SSEPSPAVTPVT). Serine 97 carries the post-translational modification Phosphoserine. Phosphothreonine occurs at positions 101 and 104. Serine 117 and serine 119 each carry phosphoserine. The PX domain maps to 140-269 (FDIEIGVSDP…QFLESSELPR (130 aa)). A 1,2-diacyl-sn-glycero-3-phospho-(1D-myo-inositol-3-phosphate) contacts are provided by arginine 183, serine 185, lysine 211, and arginine 235. The residue at position 185 (serine 185) is a Phosphoserine. The tract at residues 260 to 523 (QFLESSELPR…AFLPEAKAIA (264 aa)) is interaction with RhoG. Residue serine 277 is modified to Phosphoserine. The segment at 278-295 (GAGILRMVNKAADAVNKM) is membrane-binding amphipathic helix. One can recognise a BAR domain in the interval 299-523 (MNESDAWFEE…AFLPEAKAIA (225 aa)). The residue at position 473 (lysine 473) is an N6-acetyllysine.

The protein belongs to the sorting nexin family. Predominantly forms heterodimers with BAR domain-containing sorting nexins SNX5, SNX6 and SNX32; can self-associate to form homodimers. The heterodimers are proposed to self-assemble into helical arrays on the membrane to stabilize and expand local membrane curvature underlying endosomal tubule formation. Thought to be a component of the originally described retromer complex (also called SNX-BAR retromer) which is a pentamer containing the heterotrimeric retromer cargo-selective complex (CSC), also described as vacuolar protein sorting subcomplex (VPS), and a heterodimeric membrane-deforming subcomplex formed between SNX1 or SNX2 and SNX5 or SNX6 (also called SNX-BAR subcomplex); the respective CSC and SNX-BAR subcomplexes associate with low affinity. Interacts with SNX5, SNX6, SNX32, VPS26A, VPS29, VPS35, FNBP1, KALRN, RHOG (GDP-bound form).

It localises to the early endosome membrane. Its subcellular location is the cell projection. It is found in the lamellipodium. In terms of biological role, involved in several stages of intracellular trafficking. Interacts with membranes containing phosphatidylinositol 3-phosphate (PtdIns(3P)) or phosphatidylinositol 3,5-bisphosphate (PtdIns(3,5)P2). Acts in part as component of the retromer membrane-deforming SNX-BAR subcomplex. The SNX-BAR retromer mediates retrograde transport of cargo proteins from endosomes to the trans-Golgi network (TGN) and is involved in endosome-to-plasma membrane transport for cargo protein recycling. The SNX-BAR subcomplex functions to deform the donor membrane into a tubular profile called endosome-to-TGN transport carrier (ETC). Can sense membrane curvature and has in vitro vesicle-to-membrane remodeling activity. Required for retrograde endosome-to-TGN transport of TGN38. Promotes KALRN- and RHOG-dependent but retromer-independent membrane remodeling such as lamellipodium formation; the function is dependent on GEF activity of KALRN. This is Sorting nexin-2 (SNX2) from Pongo abelii (Sumatran orangutan).